Reading from the N-terminus, the 162-residue chain is Novel acetylcholine receptor chaperone (162 aa).

Residues 1–5 (MASPR) are Cytoplasmic-facing. The chain crosses the membrane as a helical span at residues 6-26 (TVTIVALSVTLGLFFVFMGTI). Residues 27-61 (KLTPRLSKDAYSEMKRAYKSYVKALPALKKIGISS) are Lumenal-facing. Residues 62-82 (VFLRKAIGSLELACGIVLTLV) form a helical membrane-spanning segment. Over 83–88 (PGRPKD) the chain is Cytoplasmic. A helical membrane pass occupies residues 89-109 (VANFILLLLVLIVLFFHQLVG). At 110 to 114 (DPLKR) the chain is on the lumenal side. A helical transmembrane segment spans residues 115–131 (YAHALVFGILLTCRLLV). Over 132–162 (SRQPEEEFPEKKLSRGNNGAHSREPIKMKVS) the chain is Cytoplasmic. The segment at 141 to 162 (EKKLSRGNNGAHSREPIKMKVS) is disordered. Residues 152-162 (HSREPIKMKVS) show a composition bias toward basic and acidic residues.

It belongs to the DoxX family.

Its subcellular location is the peroxisome membrane. The protein resides in the cytoplasmic vesicle. The protein localises to the endoplasmic reticulum membrane. Functionally, molecular chaperone which mediates the proper assembly and functional expression of the nicotinic acetylcholine receptors (nAChRs) throughout the brain. Essential for the proper folding, assembly, function and surface trafficking of alpha-7 (CHRNA7), alpha-4-beta-2, alpha-3-beta-2 and alpha-3-beta-4 receptors. This Xenopus tropicalis (Western clawed frog) protein is Novel acetylcholine receptor chaperone (tmem35a).